The sequence spans 101 residues: Small ribosomal subunit protein uS14 (101 aa).

The segment at 51 to 70 (LPRDSSPSRQRNRCSQTGRP) is disordered. Over residues 52–68 (PRDSSPSRQRNRCSQTG) the composition is skewed to polar residues.

It belongs to the universal ribosomal protein uS14 family. In terms of assembly, part of the 30S ribosomal subunit. Contacts proteins S3 and S10.

Functionally, binds 16S rRNA, required for the assembly of 30S particles and may also be responsible for determining the conformation of the 16S rRNA at the A site. The sequence is that of Small ribosomal subunit protein uS14 from Mannheimia succiniciproducens (strain KCTC 0769BP / MBEL55E).